We begin with the raw amino-acid sequence, 164 residues long: Anterior gradient protein 2-B (164 aa).

The signal sequence occupies residues 1-20; that stretch reads MESVLKSLFVLLVATSFTLA. 2 short sequence motifs (homodimer stabilization; interchain) span residues 34 to 43 and 49 to 56; these read SRGWGDNLEW and EGLYKAKA.

Belongs to the AGR family. In terms of assembly, monomer and homodimer.

It is found in the secreted. The protein resides in the endoplasmic reticulum. The polypeptide is Anterior gradient protein 2-B (agr2-b) (Xenopus laevis (African clawed frog)).